A 104-amino-acid polypeptide reads, in one-letter code: Large ribosomal subunit protein bL21 (104 aa).

It belongs to the bacterial ribosomal protein bL21 family. Part of the 50S ribosomal subunit. Contacts protein L20.

Functionally, this protein binds to 23S rRNA in the presence of protein L20. In Streptococcus agalactiae serotype Ia (strain ATCC 27591 / A909 / CDC SS700), this protein is Large ribosomal subunit protein bL21.